We begin with the raw amino-acid sequence, 101 residues long: Small ribosomal subunit protein uS10 (101 aa).

This sequence belongs to the universal ribosomal protein uS10 family. In terms of assembly, part of the 30S ribosomal subunit.

Functionally, involved in the binding of tRNA to the ribosomes. The sequence is that of Small ribosomal subunit protein uS10 from Bacteroides fragilis (strain ATCC 25285 / DSM 2151 / CCUG 4856 / JCM 11019 / LMG 10263 / NCTC 9343 / Onslow / VPI 2553 / EN-2).